The sequence spans 30 residues: Ribonuclease pancreatic (30 aa).

Positions Lys1–Met13 are enriched in basic and acidic residues. Residues Lys1–Xaa21 are disordered. Positions 7 and 10 each coordinate substrate. His12 acts as the Proton acceptor in catalysis.

The protein belongs to the pancreatic ribonuclease family. Monomer. Interacts with and forms tight 1:1 complexes with RNH1. Dimerization of two such complexes may occur. Interaction with RNH1 inhibits this protein. Pancreas.

The protein resides in the secreted. The catalysed reaction is an [RNA] containing cytidine + H2O = an [RNA]-3'-cytidine-3'-phosphate + a 5'-hydroxy-ribonucleotide-3'-[RNA].. It carries out the reaction an [RNA] containing uridine + H2O = an [RNA]-3'-uridine-3'-phosphate + a 5'-hydroxy-ribonucleotide-3'-[RNA].. In terms of biological role, endonuclease that catalyzes the cleavage of RNA on the 3' side of pyrimidine nucleotides. Acts on single-stranded and double-stranded RNA. The polypeptide is Ribonuclease pancreatic (RNASE1) (Odocoileus virginianus virginianus (Virginia white-tailed deer)).